The following is a 340-amino-acid chain: Ketol-acid reductoisomerase (NADP(+)) (340 aa).

One can recognise a KARI N-terminal Rossmann domain in the interval 1 to 183 (MAITVYYDKD…GGGRTGIIET (183 aa)). NADP(+) contacts are provided by residues 26 to 29 (FGSQ), Arg49, Ser52, Ser54, and 84 to 87 (DEIQ). His109 is an active-site residue. Gly135 is a binding site for NADP(+). Residues 184–329 (TFKAETETDL…RNLRAMMPWI (146 aa)) form the KARI C-terminal knotted domain. Mg(2+) contacts are provided by Asp192, Glu196, Glu228, and Glu232. Substrate is bound at residue Ser253.

The protein belongs to the ketol-acid reductoisomerase family. Mg(2+) is required as a cofactor.

It catalyses the reaction (2R)-2,3-dihydroxy-3-methylbutanoate + NADP(+) = (2S)-2-acetolactate + NADPH + H(+). The enzyme catalyses (2R,3R)-2,3-dihydroxy-3-methylpentanoate + NADP(+) = (S)-2-ethyl-2-hydroxy-3-oxobutanoate + NADPH + H(+). It functions in the pathway amino-acid biosynthesis; L-isoleucine biosynthesis; L-isoleucine from 2-oxobutanoate: step 2/4. Its pathway is amino-acid biosynthesis; L-valine biosynthesis; L-valine from pyruvate: step 2/4. Involved in the biosynthesis of branched-chain amino acids (BCAA). Catalyzes an alkyl-migration followed by a ketol-acid reduction of (S)-2-acetolactate (S2AL) to yield (R)-2,3-dihydroxy-isovalerate. In the isomerase reaction, S2AL is rearranged via a Mg-dependent methyl migration to produce 3-hydroxy-3-methyl-2-ketobutyrate (HMKB). In the reductase reaction, this 2-ketoacid undergoes a metal-dependent reduction by NADPH to yield (R)-2,3-dihydroxy-isovalerate. The chain is Ketol-acid reductoisomerase (NADP(+)) from Campylobacter jejuni subsp. jejuni serotype O:2 (strain ATCC 700819 / NCTC 11168).